Consider the following 560-residue polypeptide: Potassium-transporting ATPase potassium-binding subunit (560 aa).

Helical transmembrane passes span 11–31, 63–83, 134–154, 179–199, 254–274, 282–302, 329–349, 356–376, 379–399, 417–437, 488–508, and 530–550; these read IFLL…VAFF, SYCT…YGLL, FVTM…TALI, LLPL…PQTF, VIEM…YGHA, WVLF…VYNA, FGIP…TGSV, LTPI…VFGG, VGFV…GLMV, LIVI…AIAL, VVML…AGSL, and VILF…VLIL.

Belongs to the KdpA family. The system is composed of three essential subunits: KdpA, KdpB and KdpC.

Its subcellular location is the cell membrane. Its function is as follows. Part of the high-affinity ATP-driven potassium transport (or Kdp) system, which catalyzes the hydrolysis of ATP coupled with the electrogenic transport of potassium into the cytoplasm. This subunit binds the extracellular potassium ions and delivers the ions to the membrane domain of KdpB through an intramembrane tunnel. This is Potassium-transporting ATPase potassium-binding subunit from Geobacillus kaustophilus (strain HTA426).